We begin with the raw amino-acid sequence, 381 residues long: Probable glucuronosyltransferase Os04g0103100 (381 aa).

Over 1-69 (MASIRRPHSP…HTSFRRPLPR (69 aa)) the chain is Cytoplasmic. A disordered region spans residues 21–50 (HLGPFASSSPPSSPLRHSSSSSSPRSAAHH). Residues 26–46 (ASSSPPSSPLRHSSSSSSPRS) are compositionally biased toward low complexity. Residues 70 to 90 (FAAFFLLGSFLGLLHFLSHLP) form a helical; Signal-anchor for type II membrane protein membrane-spanning segment. Over 91–381 (RPLGPIPNPN…TDLDVIIPLK (291 aa)) the chain is Lumenal. The tract at residues 96 to 122 (IPNPNSHHRHRDPFPILQHPHPPSTPH) is disordered. 2 N-linked (GlcNAc...) asparagine glycosylation sites follow: N194 and N296.

It belongs to the glycosyltransferase 43 family.

The protein resides in the golgi apparatus membrane. Functionally, involved in the synthesis of glucuronoxylan hemicellulose in secondary cell walls. This chain is Probable glucuronosyltransferase Os04g0103100, found in Oryza sativa subsp. japonica (Rice).